The sequence spans 304 residues: Probable aspartoacylase (304 aa).

The Zn(2+) site is built by H13 and E16. Substrate is bound by residues R55 and 62–63; that span reads NR. Position 105 (H105) interacts with Zn(2+). Substrate-binding residues include E163 and Y273.

Belongs to the AspA/AstE family. Aspartoacylase subfamily. Zn(2+) is required as a cofactor.

The catalysed reaction is an N-acyl-L-aspartate + H2O = a carboxylate + L-aspartate. The sequence is that of Probable aspartoacylase from Prochlorococcus marinus (strain MIT 9313).